We begin with the raw amino-acid sequence, 181 residues long: dTTP/UTP pyrophosphatase (181 aa).

Residue Asp-67 is the Proton acceptor of the active site.

Belongs to the Maf family. YhdE subfamily. A divalent metal cation is required as a cofactor.

The protein resides in the cytoplasm. The enzyme catalyses dTTP + H2O = dTMP + diphosphate + H(+). It carries out the reaction UTP + H2O = UMP + diphosphate + H(+). Its function is as follows. Nucleoside triphosphate pyrophosphatase that hydrolyzes dTTP and UTP. May have a dual role in cell division arrest and in preventing the incorporation of modified nucleotides into cellular nucleic acids. This chain is dTTP/UTP pyrophosphatase, found in Latilactobacillus sakei subsp. sakei (strain 23K) (Lactobacillus sakei subsp. sakei).